The primary structure comprises 860 residues: Glucans biosynthesis glucosyltransferase H (860 aa).

The next 6 membrane-spanning stretches (helical) occupy residues 141 to 161, 187 to 207, 515 to 535, 572 to 592, 599 to 619, and 682 to 702; these read FILL…MKGI, VLPY…FCWV, VFLT…FLVL, LFST…MLIW, FGGV…SVLL, and FLWW…VSVI.

This sequence belongs to the glycosyltransferase 2 family. OpgH subfamily.

The protein localises to the cell inner membrane. Its pathway is glycan metabolism; osmoregulated periplasmic glucan (OPG) biosynthesis. Functionally, involved in the biosynthesis of osmoregulated periplasmic glucans (OPGs). The chain is Glucans biosynthesis glucosyltransferase H from Pseudomonas paraeruginosa (strain DSM 24068 / PA7) (Pseudomonas aeruginosa (strain PA7)).